Here is a 512-residue protein sequence, read N- to C-terminus: Cytoplasmic tRNA 2-thiolation protein 2-A (512 aa).

It belongs to the CTU2/NCS2 family.

It localises to the cytoplasm. Its pathway is tRNA modification; 5-methoxycarbonylmethyl-2-thiouridine-tRNA biosynthesis. Plays a central role in 2-thiolation of mcm(5)S(2)U at tRNA wobble positions of tRNA(Lys), tRNA(Glu) and tRNA(Gln). May act by forming a heterodimer with ctu1/atpbd3 that ligates sulfur from thiocarboxylated urm1 onto the uridine of tRNAs at wobble position. In Xenopus laevis (African clawed frog), this protein is Cytoplasmic tRNA 2-thiolation protein 2-A (ctu2-a).